The sequence spans 548 residues: 5-aminolevulinate synthase, mitochondrial (548 aa).

A mitochondrion-targeting transit peptide spans 1–22; sequence MQRSIFARFGNSSAAVSTLNRL. Residues arginine 91, serine 204, and lysine 223 each contribute to the substrate site. Pyridoxal 5'-phosphate is bound by residues serine 256, histidine 284, and threonine 334. The active site involves lysine 337. Lysine 337 is subject to N6-(pyridoxal phosphate)lysine. Pyridoxal 5'-phosphate is bound by residues threonine 366 and threonine 367. Substrate is bound at residue threonine 452.

The protein belongs to the class-II pyridoxal-phosphate-dependent aminotransferase family. In terms of assembly, homodimer. Interacts with MCX1. Pyridoxal 5'-phosphate is required as a cofactor.

The protein resides in the mitochondrion matrix. It catalyses the reaction succinyl-CoA + glycine + H(+) = 5-aminolevulinate + CO2 + CoA. The protein operates within porphyrin-containing compound metabolism; protoporphyrin-IX biosynthesis; 5-aminolevulinate from glycine: step 1/1. With respect to regulation, ihnhibited by hemin. Functionally, catalyzes the synthesis of 5-aminolevulinate (ALA) from succinyl-CoA and glycine, the first and rate-limiting step in heme biosynthesis. This chain is 5-aminolevulinate synthase, mitochondrial, found in Saccharomyces cerevisiae (strain ATCC 204508 / S288c) (Baker's yeast).